A 347-amino-acid polypeptide reads, in one-letter code: MTISVAIAGATGYAGSEILRLLLSHPAYLSGDLRIGALTGHSNAGQRVSELMPHLPQLADRVIEDTTPEVLAGHDIVFLGLPHGHSADIGRQLGESVTVIDCAADFRLRSKEDWDAFYGGEYAGSWPYGIPEVPGNRDKLKGSNRVAVPGCFPTTITLGALPAVAKGLIEPDLSVIAITGVSGAGKKASVAQLGAETMGNLKAYKPGGTHRHTPEVLQNLQPFTQDSVSVSFTPVLAPLPRGILATITAPLKGDVDKHSVAQAFRDFYAEEPFCLVLPEDQQPETQNVVGTNMVHIQAHVDERTQRLVITAALDNLCKGTAGAAVQCMNLTLGWEETSGLPQAAVAP.

Cys-151 is a catalytic residue.

The protein belongs to the NAGSA dehydrogenase family. Type 1 subfamily.

It localises to the cytoplasm. The enzyme catalyses N-acetyl-L-glutamate 5-semialdehyde + phosphate + NADP(+) = N-acetyl-L-glutamyl 5-phosphate + NADPH + H(+). It functions in the pathway amino-acid biosynthesis; L-arginine biosynthesis; N(2)-acetyl-L-ornithine from L-glutamate: step 3/4. Functionally, catalyzes the NADPH-dependent reduction of N-acetyl-5-glutamyl phosphate to yield N-acetyl-L-glutamate 5-semialdehyde. In Corynebacterium aurimucosum (strain ATCC 700975 / DSM 44827 / CIP 107346 / CN-1) (Corynebacterium nigricans), this protein is N-acetyl-gamma-glutamyl-phosphate reductase.